The sequence spans 275 residues: tRNA-splicing endonuclease subunit SEN34 (275 aa).

Catalysis depends on residues Y209, H217, and K250.

This sequence belongs to the tRNA-intron endonuclease family. As to quaternary structure, heterotetramer composed of SEN2, SEN15, SEN34 and SEN54. Interacts directly with SEN15.

It is found in the nucleus. The protein resides in the endomembrane system. The protein localises to the mitochondrion outer membrane. It catalyses the reaction pretRNA = a 3'-half-tRNA molecule with a 5'-OH end + a 5'-half-tRNA molecule with a 2',3'-cyclic phosphate end + an intron with a 2',3'-cyclic phosphate and a 5'-hydroxyl terminus.. Its function is as follows. Constitutes one of the two catalytic subunit of the tRNA-splicing endonuclease complex, a complex responsible for identification and cleavage of the splice sites in pre-tRNA. It cleaves pre-tRNA at the 5'- and 3'-splice sites to release the intron. The products are an intron and two tRNA half-molecules bearing 2',3'-cyclic phosphate and 5'-OH termini. There are no conserved sequences at the splice sites, but the intron is invariably located at the same site in the gene, placing the splice sites an invariant distance from the constant structural features of the tRNA body. It probably carries the active site for 3'-splice site cleavage. The chain is tRNA-splicing endonuclease subunit SEN34 (SEN34) from Saccharomyces cerevisiae (strain ATCC 204508 / S288c) (Baker's yeast).